Reading from the N-terminus, the 340-residue chain is Ketol-acid reductoisomerase (NADP(+)) (340 aa).

The KARI N-terminal Rossmann domain maps to 3-183 (LPIYYDKDCD…GGGRTGIIHT (181 aa)). NADP(+) contacts are provided by residues 26–29 (FGSQ), serine 54, and 84–87 (DEIQ). The active site involves histidine 109. Glycine 135 is an NADP(+) binding site. Residues 184–329 (TFKDETETDL…KRLRAMMPWI (146 aa)) enclose the KARI C-terminal knotted domain. Mg(2+) contacts are provided by aspartate 192, glutamate 196, glutamate 228, and glutamate 232. Serine 253 is a binding site for substrate.

Belongs to the ketol-acid reductoisomerase family. Requires Mg(2+) as cofactor.

It catalyses the reaction (2R)-2,3-dihydroxy-3-methylbutanoate + NADP(+) = (2S)-2-acetolactate + NADPH + H(+). The enzyme catalyses (2R,3R)-2,3-dihydroxy-3-methylpentanoate + NADP(+) = (S)-2-ethyl-2-hydroxy-3-oxobutanoate + NADPH + H(+). Its pathway is amino-acid biosynthesis; L-isoleucine biosynthesis; L-isoleucine from 2-oxobutanoate: step 2/4. The protein operates within amino-acid biosynthesis; L-valine biosynthesis; L-valine from pyruvate: step 2/4. Its function is as follows. Involved in the biosynthesis of branched-chain amino acids (BCAA). Catalyzes an alkyl-migration followed by a ketol-acid reduction of (S)-2-acetolactate (S2AL) to yield (R)-2,3-dihydroxy-isovalerate. In the isomerase reaction, S2AL is rearranged via a Mg-dependent methyl migration to produce 3-hydroxy-3-methyl-2-ketobutyrate (HMKB). In the reductase reaction, this 2-ketoacid undergoes a metal-dependent reduction by NADPH to yield (R)-2,3-dihydroxy-isovalerate. The sequence is that of Ketol-acid reductoisomerase (NADP(+)) from Nitratiruptor sp. (strain SB155-2).